The chain runs to 432 residues: Adenylosuccinate synthetase (432 aa).

Residues 12-18 and 40-42 contribute to the GTP site; these read GDEGKGK and GHT. Asp13 serves as the catalytic Proton acceptor. Mg(2+) contacts are provided by Asp13 and Gly40. IMP-binding positions include 13 to 16, 38 to 41, Thr132, Arg146, Gln226, Thr241, and Arg305; these read DEGK and NAGH. His41 serves as the catalytic Proton donor. Residue 301–307 coordinates substrate; that stretch reads VVTGRKR. GTP is bound by residues Arg307, 333–335, and 415–417; these read KLD and STS.

Belongs to the adenylosuccinate synthetase family. Homodimer. It depends on Mg(2+) as a cofactor.

It localises to the cytoplasm. The catalysed reaction is IMP + L-aspartate + GTP = N(6)-(1,2-dicarboxyethyl)-AMP + GDP + phosphate + 2 H(+). Its pathway is purine metabolism; AMP biosynthesis via de novo pathway; AMP from IMP: step 1/2. Its function is as follows. Plays an important role in the de novo pathway of purine nucleotide biosynthesis. Catalyzes the first committed step in the biosynthesis of AMP from IMP. This chain is Adenylosuccinate synthetase, found in Rhizobium leguminosarum bv. trifolii (strain WSM2304).